The sequence spans 668 residues: Biotin biosynthesis bifunctional protein BioWF (668 aa).

A substrate-binding site is contributed by Arg293. 380-381 (GY) lines the pyridoxal 5'-phosphate pocket. Residue His405 participates in substrate binding. Residues Ser451, 476 to 479 (DDAH), and 507 to 510 (TASK) contribute to the pyridoxal 5'-phosphate site. Lys510 is modified (N6-(pyridoxal phosphate)lysine).

This sequence in the N-terminal section; belongs to the BioW family. It in the C-terminal section; belongs to the class-II pyridoxal-phosphate-dependent aminotransferase family. BioF subfamily. In terms of assembly, homodimer. Mg(2+) is required as a cofactor. It depends on pyridoxal 5'-phosphate as a cofactor.

The catalysed reaction is heptanedioate + ATP + CoA = 6-carboxyhexanoyl-CoA + AMP + diphosphate. The enzyme catalyses 6-carboxyhexanoyl-[ACP] + L-alanine + H(+) = (8S)-8-amino-7-oxononanoate + holo-[ACP] + CO2. It functions in the pathway metabolic intermediate metabolism; pimeloyl-CoA biosynthesis; pimeloyl-CoA from pimelate: step 1/1. Its pathway is cofactor biosynthesis; biotin biosynthesis. Functionally, catalyzes both the decarboxylative condensation of pimeloyl-[acyl-carrier protein] and L-alanine to produce 8-amino-7-oxononanoate (AON), [acyl-carrier protein], and carbon dioxide, and the transformation of pimelate into pimeloyl-CoA with concomitant hydrolysis of ATP to AMP. This Cutibacterium acnes (strain SK137) (Propionibacterium acnes) protein is Biotin biosynthesis bifunctional protein BioWF.